The sequence spans 191 residues: Holliday junction branch migration complex subunit RuvA (191 aa).

The domain I stretch occupies residues 1–63 (MIRYLRGLVL…EEGLSLYGFP (63 aa)). Residues 64–136 (DEENLALFEL…LKGKVPPHLL (73 aa)) form a domain II region. The flexible linker stretch occupies residues 136–140 (LAGEK). Residues 141–191 (VESEAAEEAVMALAALGFKEAQARAVVLDLLAQNPKARAQDLIKEALKRLR) form a domain III region.

The protein belongs to the RuvA family. As to quaternary structure, homotetramer. Forms an RuvA(8)-RuvB(12)-Holliday junction (HJ) complex. HJ DNA is sandwiched between 2 RuvA tetramers; dsDNA enters through RuvA and exits via RuvB. An RuvB hexamer assembles on each DNA strand where it exits the tetramer. Each RuvB hexamer is contacted by two RuvA subunits (via domain III) on 2 adjacent RuvB subunits; this complex drives branch migration. In the full resolvosome a probable DNA-RuvA(4)-RuvB(12)-RuvC(2) complex forms which resolves the HJ.

The protein localises to the cytoplasm. Functionally, the RuvA-RuvB-RuvC complex processes Holliday junction (HJ) DNA during genetic recombination and DNA repair, while the RuvA-RuvB complex plays an important role in the rescue of blocked DNA replication forks via replication fork reversal (RFR). RuvA specifically binds to HJ cruciform DNA, conferring on it an open structure. The RuvB hexamer acts as an ATP-dependent pump, pulling dsDNA into and through the RuvAB complex. HJ branch migration allows RuvC to scan DNA until it finds its consensus sequence, where it cleaves and resolves the cruciform DNA. This chain is Holliday junction branch migration complex subunit RuvA, found in Thermus thermophilus (strain ATCC BAA-163 / DSM 7039 / HB27).